Consider the following 515-residue polypeptide: 2-isopropylmalate synthase (515 aa).

One can recognise a Pyruvate carboxyltransferase domain in the interval 4–266 (ISVFDTTLRD…ETGLILKEIK (263 aa)). Residues aspartate 13, histidine 201, histidine 203, and asparagine 237 each coordinate Mn(2+). Residues 391 to 515 (ELQTLQVNYG…AEVYGSKVEV (125 aa)) form a regulatory domain region.

This sequence belongs to the alpha-IPM synthase/homocitrate synthase family. LeuA type 1 subfamily. Homodimer. Requires Mn(2+) as cofactor.

It localises to the cytoplasm. It carries out the reaction 3-methyl-2-oxobutanoate + acetyl-CoA + H2O = (2S)-2-isopropylmalate + CoA + H(+). Its pathway is amino-acid biosynthesis; L-leucine biosynthesis; L-leucine from 3-methyl-2-oxobutanoate: step 1/4. In terms of biological role, catalyzes the condensation of the acetyl group of acetyl-CoA with 3-methyl-2-oxobutanoate (2-ketoisovalerate) to form 3-carboxy-3-hydroxy-4-methylpentanoate (2-isopropylmalate). In Halalkalibacterium halodurans (strain ATCC BAA-125 / DSM 18197 / FERM 7344 / JCM 9153 / C-125) (Bacillus halodurans), this protein is 2-isopropylmalate synthase.